Reading from the N-terminus, the 414-residue chain is Serine hydroxymethyltransferase (414 aa).

Residues Leu117 and Gly121–Leu123 each bind (6S)-5,6,7,8-tetrahydrofolate. At Lys226 the chain carries N6-(pyridoxal phosphate)lysine. Residue Ser349–Phe351 participates in (6S)-5,6,7,8-tetrahydrofolate binding.

The protein belongs to the SHMT family. In terms of assembly, homodimer. Pyridoxal 5'-phosphate serves as cofactor.

The protein localises to the cytoplasm. It carries out the reaction (6R)-5,10-methylene-5,6,7,8-tetrahydrofolate + glycine + H2O = (6S)-5,6,7,8-tetrahydrofolate + L-serine. It functions in the pathway one-carbon metabolism; tetrahydrofolate interconversion. The protein operates within amino-acid biosynthesis; glycine biosynthesis; glycine from L-serine: step 1/1. In terms of biological role, catalyzes the reversible interconversion of serine and glycine with tetrahydrofolate (THF) serving as the one-carbon carrier. Also exhibits THF-independent aldolase activity toward beta-hydroxyamino acids, producing glycine and aldehydes, via a retro-aldol mechanism. The sequence is that of Serine hydroxymethyltransferase from Methanospirillum hungatei JF-1 (strain ATCC 27890 / DSM 864 / NBRC 100397 / JF-1).